Reading from the N-terminus, the 95-residue chain is Glutamyl-tRNA(Gln) amidotransferase subunit C (95 aa).

This sequence belongs to the GatC family. In terms of assembly, heterotrimer of A, B and C subunits.

The enzyme catalyses L-glutamyl-tRNA(Gln) + L-glutamine + ATP + H2O = L-glutaminyl-tRNA(Gln) + L-glutamate + ADP + phosphate + H(+). It catalyses the reaction L-aspartyl-tRNA(Asn) + L-glutamine + ATP + H2O = L-asparaginyl-tRNA(Asn) + L-glutamate + ADP + phosphate + 2 H(+). Functionally, allows the formation of correctly charged Asn-tRNA(Asn) or Gln-tRNA(Gln) through the transamidation of misacylated Asp-tRNA(Asn) or Glu-tRNA(Gln) in organisms which lack either or both of asparaginyl-tRNA or glutaminyl-tRNA synthetases. The reaction takes place in the presence of glutamine and ATP through an activated phospho-Asp-tRNA(Asn) or phospho-Glu-tRNA(Gln). This Rhizobium meliloti (strain 1021) (Ensifer meliloti) protein is Glutamyl-tRNA(Gln) amidotransferase subunit C.